We begin with the raw amino-acid sequence, 72 residues long: UPF0154 protein BH2350 (72 aa).

The helical transmembrane segment at 3 to 23 (WMILLWITLGIVIGIAIGFFI) threads the bilayer.

It belongs to the UPF0154 family.

It localises to the membrane. In Halalkalibacterium halodurans (strain ATCC BAA-125 / DSM 18197 / FERM 7344 / JCM 9153 / C-125) (Bacillus halodurans), this protein is UPF0154 protein BH2350.